Here is a 54-residue protein sequence, read N- to C-terminus: Large ribosomal subunit protein bL33A (54 aa).

The protein belongs to the bacterial ribosomal protein bL33 family.

This Myxococcus xanthus (strain DK1622) protein is Large ribosomal subunit protein bL33A.